The chain runs to 828 residues: BEN domain-containing protein 3 (828 aa).

Lysine 20 is covalently cross-linked (Glycyl lysine isopeptide (Lys-Gly) (interchain with G-Cter in SUMO); alternate). Lysine 20 participates in a covalent cross-link: Glycyl lysine isopeptide (Lys-Gly) (interchain with G-Cter in SUMO1); alternate. Lysine 20 participates in a covalent cross-link: Glycyl lysine isopeptide (Lys-Gly) (interchain with G-Cter in SUMO2); alternate. Residues lysine 41, lysine 56, lysine 58, lysine 73, lysine 128, lysine 129, lysine 137, lysine 142, and lysine 158 each participate in a glycyl lysine isopeptide (Lys-Gly) (interchain with G-Cter in SUMO2) cross-link. The short motif at 56–58 (KRK) is the Nuclear localization signal element. Residue serine 164 is modified to Phosphoserine. Positions 164–184 (SPSSLRLLNEPQKRDCGSTGA) are disordered. Lysine 176 is covalently cross-linked (Glycyl lysine isopeptide (Lys-Gly) (interchain with G-Cter in SUMO2)). Positions 242 to 343 (PPPEYQLTAA…DFFSRFWAQR (102 aa)) constitute a BEN 1 domain. Serine 379 bears the Phosphoserine mark. The BEN 2 domain occupies 387–487 (ASDHVVDTQD…DELEGLGLDA (101 aa)). Lysine 427 is covalently cross-linked (Glycyl lysine isopeptide (Lys-Gly) (interchain with G-Cter in SUMO2)). Positions 483–504 (LGLDAGSEGDPPRDDCYDSSSL) are disordered. Serine 489 carries the post-translational modification Phosphoserine. A Glycyl lysine isopeptide (Lys-Gly) (interchain with G-Cter in SUMO); alternate cross-link involves residue lysine 512. Lysine 512 participates in a covalent cross-link: Glycyl lysine isopeptide (Lys-Gly) (interchain with G-Cter in SUMO2); alternate. Residue lysine 528 forms a Glycyl lysine isopeptide (Lys-Gly) (interchain with G-Cter in SUMO2) linkage. Residues 548–650 (VPGADCLLSK…ERCRRRDTEQ (103 aa)) form the BEN 3 domain. Residue lysine 700 forms a Glycyl lysine isopeptide (Lys-Gly) (interchain with G-Cter in SUMO2) linkage. Residues 715 to 816 (VPSPYLLSDK…ERCRRPNRKK (102 aa)) form the BEN 4 domain.

Homooligomer, probably a homooctamer. Interacts with HDAC2 and HDAC3, but not HDAC1. Interacts with SALL4. Interacts with SMARCA5/SNF2H, BAZ2A/TIP5 and USP21. Interacts with the nucleosome remodeling and histone deacetylase (NuRD) repressor complex. Interacts (via BEN domains 1 and 3) with ERCC6L (via N-terminal TPR repeat); the interaction is direct. In terms of processing, sumoylated at Lys-20 by SUMO1 and at Lys-512 by SUMO1, SUMO2 and SUMO3. Sumoylation probably occurs sequentially, with that of Lys-20 preceding that of Lys-512. It does not alter association with heterochromatin, but is required for the repression of transcription. Expressed at least in heart, kidney, liver, ovary and spleen, with highest levels in spleen and lowest in heart. Expressed on the surface of T-cells.

It is found in the nucleus. The protein resides in the nucleolus. In terms of biological role, transcriptional repressor which associates with the NoRC (nucleolar remodeling complex) complex and plays a key role in repressing rDNA transcription. The sumoylated form modulates the stability of the NoRC complex component BAZ2A/TIP5 by controlling its USP21-mediated deubiquitination. Binds to unmethylated major satellite DNA and is involved in the recruitment of the Polycomb repressive complex 2 (PRC2) to major satellites. Stimulates the ERCC6L translocase and ATPase activities. This chain is BEN domain-containing protein 3 (BEND3), found in Homo sapiens (Human).